The primary structure comprises 279 residues: Polyamine aminopropyltransferase (279 aa).

In terms of domain architecture, PABS spans 4-237 (IEWYPRGYGV…SPWAFLVGIK (234 aa)). S-methyl-5'-thioadenosine is bound at residue glutamine 29. Positions 60 and 84 each coordinate spermidine. S-methyl-5'-thioadenosine is bound by residues glutamate 104 and 141–142 (DG). Aspartate 158 acts as the Proton acceptor in catalysis. Residue 158 to 161 (DSTD) participates in spermidine binding. An S-methyl-5'-thioadenosine-binding site is contributed by proline 165.

This sequence belongs to the spermidine/spermine synthase family. As to quaternary structure, homodimer or homotetramer.

The protein resides in the cytoplasm. It catalyses the reaction S-adenosyl 3-(methylsulfanyl)propylamine + putrescine = S-methyl-5'-thioadenosine + spermidine + H(+). The protein operates within amine and polyamine biosynthesis; spermidine biosynthesis; spermidine from putrescine: step 1/1. In terms of biological role, catalyzes the irreversible transfer of a propylamine group from the amino donor S-adenosylmethioninamine (decarboxy-AdoMet) to putrescine (1,4-diaminobutane) to yield spermidine. In Pyrococcus abyssi (strain GE5 / Orsay), this protein is Polyamine aminopropyltransferase.